A 177-amino-acid chain; its full sequence is MSVNMDELKHQVMINQFVLTAGCAADQAKQLLQAAHWQFETALSAFFQETNIPYSHHHHQMMCTPANTPATPPNFPDALTMFSRLKASESFHSGGSGSPMAATATSPPPHFPHAATSSSAASSWPTAASPPGGPQHHQPQPPLWTPTPPSPASDWPPLAPQQATSEPRAHPAMEAER.

The interval 89–177 is disordered; that stretch reads ESFHSGGSGS…RAHPAMEAER (89 aa). The segment covering 112–138 has biased composition (low complexity); the sequence is PHAATSSSAASSWPTAASPPGGPQHHQ. Residues 139-151 show a composition bias toward pro residues; that stretch reads PQPPLWTPTPPSP. Over residues 167 to 177 the composition is skewed to basic and acidic residues; that stretch reads PRAHPAMEAER.

This sequence belongs to the UBALD family.

The protein is UBA-like domain-containing protein 1 (UBALD1) of Homo sapiens (Human).